Reading from the N-terminus, the 223-residue chain is Serum amyloid P-component (223 aa).

A signal peptide spans 1 to 19; that stretch reads MDKMLFWVSVFTIFLDVFA. Residues 24 to 223 form the Pentraxin (PTX) domain; sequence DKKVFVFPRE…YVIIKPRVWD (200 aa). A disulfide bridge connects residues C55 and C114. Positions 77, 78, 155, 156, 157, and 167 each coordinate Ca(2+). The N-linked (GlcNAc...) asparagine glycan is linked to N198.

This sequence belongs to the pentraxin family. As to quaternary structure, homopentamer. Pentraxin (or pentaxin) have a discoid arrangement of 5 non-covalently bound subunits. Requires Ca(2+) as cofactor.

It is found in the secreted. This is Serum amyloid P-component (PTX2) from Cavia porcellus (Guinea pig).